The sequence spans 164 residues: Protein SprT (164 aa).

The SprT-like domain maps to 12 to 157 (CFLQAESFFK…CRRCRQTLVF (146 aa)). His-69 contributes to the Zn(2+) binding site. The active site involves Glu-70. Residue His-73 participates in Zn(2+) binding.

The protein belongs to the SprT family. The cofactor is Zn(2+).

Its subcellular location is the cytoplasm. In Pseudomonas fluorescens (strain SBW25), this protein is Protein SprT.